We begin with the raw amino-acid sequence, 102 residues long: Small ribosomal subunit protein uS10 (102 aa).

The protein belongs to the universal ribosomal protein uS10 family. In terms of assembly, part of the 30S ribosomal subunit.

Its function is as follows. Involved in the binding of tRNA to the ribosomes. The polypeptide is Small ribosomal subunit protein uS10 (Acidothermus cellulolyticus (strain ATCC 43068 / DSM 8971 / 11B)).